The chain runs to 828 residues: Periplasmic nitrate reductase (828 aa).

A signal peptide (tat-type signal) is located at residues 1-31 (MKLSRRSFMKANAVAAAAAAAGLSVPGVARA). The 4Fe-4S Mo/W bis-MGD-type domain occupies 39-95 (IKWDKAPCRFCGTGCGVLVGTQQGRVVACQGDPDAPVNRGLNCIKGYFLPKIMYGKD). [4Fe-4S] cluster contacts are provided by Cys46, Cys49, Cys53, and Cys81. Mo-bis(molybdopterin guanine dinucleotide) contacts are provided by residues Lys83, Gln150, Asn175, Cys179, 212-219 (WGANMAEM), 243-247 (STYQH), 262-264 (QSD), Met372, Gln376, Asn482, 508-509 (SD), Lys531, Asp558, and 718-727 (TGRVLEHWHT). Position 794 (Phe794) interacts with substrate. Positions 802 and 819 each coordinate Mo-bis(molybdopterin guanine dinucleotide).

Belongs to the prokaryotic molybdopterin-containing oxidoreductase family. NasA/NapA/NarB subfamily. Component of the periplasmic nitrate reductase NapAB complex composed of NapA and NapB. [4Fe-4S] cluster is required as a cofactor. Mo-bis(molybdopterin guanine dinucleotide) serves as cofactor. Predicted to be exported by the Tat system. The position of the signal peptide cleavage has not been experimentally proven.

It localises to the periplasm. It carries out the reaction 2 Fe(II)-[cytochrome] + nitrate + 2 H(+) = 2 Fe(III)-[cytochrome] + nitrite + H2O. In terms of biological role, catalytic subunit of the periplasmic nitrate reductase complex NapAB. Receives electrons from NapB and catalyzes the reduction of nitrate to nitrite. In Escherichia coli O9:H4 (strain HS), this protein is Periplasmic nitrate reductase.